We begin with the raw amino-acid sequence, 138 residues long: Brain natriuretic peptide (138 aa).

An N-terminal signal peptide occupies residues 1 to 22 (MRLSSMWLCSLLLILKLQLSST). Disordered stretches follow at residues 50 to 84 (EQMAVDQSAPGQRDLLDSLSTEDAGDGPQPDAGLD) and 99 to 138 (SVRNDSSRRSSGCFGRRMDRIGSMSSLGCNTVGRYNPKQR). A disulfide bond links C111 and C127.

Belongs to the natriuretic peptide family.

Its subcellular location is the secreted. Cardiac hormone which may function as a paracrine antifibrotic factor in the heart. Also plays a key role in cardiovascular homeostasis through natriuresis, diuresis, vasorelaxation, and inhibition of renin and aldosterone secretion. In Oreochromis mossambicus (Mozambique tilapia), this protein is Brain natriuretic peptide (nppb).